Here is a 594-residue protein sequence, read N- to C-terminus: MNLFSSTTLTMLFVLTLPIMMTNTNIYKSDKYPTYVKNTVSSAFLISLVPMIAFTNTGQEMIISNWHWITIQTLKLTLSFKADYFSIVFAPVALFVTWSIMEFSMWYMHSDPHINQFFKYLLLFLITMMILVTANNLFQLFIGWEGVGIMSFLLIGWWHGRTDANTAAIQAILYNRIGDVGFIMAMAWFLSNLNTWDMQQIFMINPTHSNLPLMGLILAATGKSAQFGLHPWLPSAMEGPTPVSALLHSSTMVVAGVFLLIRFYPMMENNNLMQTITMCLGAITTLFTAMCALTQNDIKKIIAFSTSSQLGLMMVTIGINQPHLAFLHICTHAFFKAMLFMCSGSIIHNLNNEQDIRKMGGLFKTMPFTTTTLIVGSMALTGVPFLTGFYSKDLIIEAANTSYSNAWALLITLVATSLTAVYSTRIIFFALLGHPRFPTSTLIHENNPLLLNSLKRLMAGSIFAGFILSHNLPPMTTPLMTMPPYLKMTALAVTMLGFTLAFEITLNTQNLKYKHPTNSFKFSTLLGYFPTIMHRLPPHLSLTASQKLASSLLDSAWLENILPKSMAHAQLKLSTLVSNQKGLMKMYFSIIPYH.

15 helical membrane-spanning segments follow: residues 1–21, 43–63, 87–107, 114–134, 137–157, 171–191, 211–233, 241–261, 272–292, 301–320, 325–347, 366–386, 409–429, 457–477, and 486–506; these read MNLF…PIMM, AFLI…EMII, IVFA…SMWY, INQF…LVTA, LFQL…LIGW, AILY…WFLS, LPLM…HPWL, TPVS…FLLI, LMQT…AMCA, IIAF…IGIN, AFLH…GSII, MPFT…VPFL, LLIT…IIFF, LMAG…PMTT, and LKMT…EITL.

This sequence belongs to the complex I subunit 5 family. As to quaternary structure, core subunit of respiratory chain NADH dehydrogenase (Complex I) which is composed of 45 different subunits.

It is found in the mitochondrion inner membrane. It carries out the reaction a ubiquinone + NADH + 5 H(+)(in) = a ubiquinol + NAD(+) + 4 H(+)(out). Core subunit of the mitochondrial membrane respiratory chain NADH dehydrogenase (Complex I) which catalyzes electron transfer from NADH through the respiratory chain, using ubiquinone as an electron acceptor. Essential for the catalytic activity and assembly of complex I. The sequence is that of NADH-ubiquinone oxidoreductase chain 5 (MT-ND5) from Hippopotamus amphibius (Hippopotamus).